Reading from the N-terminus, the 295-residue chain is Vesicle-associated protein 4-2 (295 aa).

Residues 1–10 (MTMTEEKPTS) show a composition bias toward basic and acidic residues. The segment at 1 to 99 (MTMTEEKPTS…PSPSVSSVAK (99 aa)) is disordered. Positions 31 to 53 (NAASSAATSPFPSGASSSSTSSH) are enriched in low complexity. The segment covering 54-71 (LHNHHQHHHQHHHQHHHQ) has biased composition (basic residues). The span at 83-98 (GQNQHPTPSPSVSSVA) shows a compositional bias: polar residues. The region spanning 107 to 229 (RLKLDPSEKL…KEQILRVIFL (123 aa)) is the MSP domain. Basic and acidic residues predominate over residues 249–263 (DAAVEARKKPPEETG). Positions 249–270 (DAAVEARKKPPEETGPKMIGEG) are disordered. At S294 the chain carries Phosphoserine.

The protein belongs to the VAMP-associated protein (VAP) (TC 9.B.17) family.

Functionally, may play a role in vesicle trafficking. This Arabidopsis thaliana (Mouse-ear cress) protein is Vesicle-associated protein 4-2 (PVA42).